Consider the following 418-residue polypeptide: Histidine--tRNA ligase (418 aa).

The protein belongs to the class-II aminoacyl-tRNA synthetase family.

It is found in the cytoplasm. It carries out the reaction tRNA(His) + L-histidine + ATP = L-histidyl-tRNA(His) + AMP + diphosphate + H(+). This chain is Histidine--tRNA ligase, found in Methanococcus maripaludis (strain C7 / ATCC BAA-1331).